The following is a 1434-amino-acid chain: Receptor-type tyrosine-protein phosphatase U (1434 aa).

The signal sequence occupies residues 1–17; that stretch reads MRSARALLLALALRVCA. Topologically, residues 18-748 are extracellular; it reads LDSETPSAGC…QHSEEMGLIL (731 aa). An MAM domain is found at 25–187; the sequence is AGCTFEEDDD…ILLLNYPCSK (163 aa). N-linked (GlcNAc...) asparagine glycosylation occurs at Asn74. One can recognise an Ig-like C2-type domain in the interval 189–274; sequence PHFSRLGDVE…TQSSRGSGVS (86 aa). A disulfide bond links Cys209 and Cys263. 4 Fibronectin type-III domains span residues 287-382, 385-483, 484-590, and 597-677; these read PIAP…CAEP, APKG…TDED, VPGG…SAPT, and PSPL…TEAK. Asn409 is a glycosylation site (N-linked (GlcNAc...) asparagine). A glycan (N-linked (GlcNAc...) asparagine) is linked at Asn684. A helical membrane pass occupies residues 749-769; it reads GICAGGLVVLIILLGAIIVVI. The Cytoplasmic segment spans residues 770-1434; that stretch reads RKGKPVNMTK…LEYLESLETR (665 aa). Polar residues predominate over residues 824 to 839; it reads RGDQRSSVVNESSSLL. The interval 824–851 is disordered; that stretch reads RGDQRSSVVNESSSLLGGSPRRQCGRKG. 2 consecutive Tyrosine-protein phosphatase domains span residues 876-1132 and 1164-1427; these read KTAE…ILEA and LREE…ALEY. Substrate is bound by residues Glu1041, 1073–1079, and Gln1117; that span reads CSAGTGR. The active-site Phosphocysteine intermediate is Cys1073. Cys1368 functions as the Phosphocysteine intermediate in the catalytic mechanism.

This sequence belongs to the protein-tyrosine phosphatase family. Receptor class 2B subfamily.

The protein localises to the cell junction. The protein resides in the cell membrane. It carries out the reaction O-phospho-L-tyrosyl-[protein] + H2O = L-tyrosyl-[protein] + phosphate. Its function is as follows. Tyrosine-protein phosphatase which dephosphorylates CTNNB1. May function in cell proliferation and migration and play a role in the maintenance of epithelial integrity. The polypeptide is Receptor-type tyrosine-protein phosphatase U (PTPRU) (Gallus gallus (Chicken)).